Reading from the N-terminus, the 488-residue chain is Protein nucleotidyltransferase YdiU (488 aa).

Residues Gly-91, Gly-93, Arg-94, Lys-114, Asp-126, Gly-127, Arg-177, and Arg-184 each contribute to the ATP site. The tract at residues 108-127 (RFDIQLKGSGPTPYSRRGDG) is disordered. Asp-253 serves as the catalytic Proton acceptor. Mg(2+)-binding residues include Asn-254 and Asp-263. Position 263 (Asp-263) interacts with ATP.

This sequence belongs to the SELO family. Mg(2+) serves as cofactor. The cofactor is Mn(2+).

The catalysed reaction is L-seryl-[protein] + ATP = 3-O-(5'-adenylyl)-L-seryl-[protein] + diphosphate. The enzyme catalyses L-threonyl-[protein] + ATP = 3-O-(5'-adenylyl)-L-threonyl-[protein] + diphosphate. It catalyses the reaction L-tyrosyl-[protein] + ATP = O-(5'-adenylyl)-L-tyrosyl-[protein] + diphosphate. It carries out the reaction L-histidyl-[protein] + UTP = N(tele)-(5'-uridylyl)-L-histidyl-[protein] + diphosphate. The catalysed reaction is L-seryl-[protein] + UTP = O-(5'-uridylyl)-L-seryl-[protein] + diphosphate. The enzyme catalyses L-tyrosyl-[protein] + UTP = O-(5'-uridylyl)-L-tyrosyl-[protein] + diphosphate. Functionally, nucleotidyltransferase involved in the post-translational modification of proteins. It can catalyze the addition of adenosine monophosphate (AMP) or uridine monophosphate (UMP) to a protein, resulting in modifications known as AMPylation and UMPylation. This Bacillus anthracis (strain A0248) protein is Protein nucleotidyltransferase YdiU.